The chain runs to 644 residues: Chaperone protein DnaK (644 aa).

Residue Thr-199 is modified to Phosphothreonine; by autocatalysis. Residues 589-644 (QALAEASHKLAEKMYSQGQGPQAGPGEEPSGQSGGTEKPVEGEVVDAEFEEVKNKK) form a disordered region. Residues 604 to 619 (SQGQGPQAGPGEEPSG) show a composition bias toward low complexity.

This sequence belongs to the heat shock protein 70 family.

Functionally, acts as a chaperone. The polypeptide is Chaperone protein DnaK (Nitrosospira multiformis (strain ATCC 25196 / NCIMB 11849 / C 71)).